Here is a 379-residue protein sequence, read N- to C-terminus: AT-rich binding protein (379 aa).

The segment at 29 to 52 (IVCHTCQEELQTQDQFWKHIQDEH) adopts a C2H2-type 1 zinc-finger fold. The span at 114-124 (EQREVELHEAH) shows a compositional bias: basic and acidic residues. 2 disordered regions span residues 114–148 (EQRE…DAAK) and 221–267 (PTAS…STTL). 3 stretches are compositionally biased toward low complexity: residues 125–143 (QQQQ…QQQQ), 223–242 (ASFV…TTPP), and 249–262 (QQQQ…QQQQ). 2 C2H2-type zinc fingers span residues 312-336 (YICD…RVVH) and 342-365 (FNCD…KKKH).

It is found in the nucleus. Functionally, may be a transcription factor for genes having (A+T) stretches in their promoter and/or enhancer regions. Binds to AT rich DNA. This Drosophila willistoni (Fruit fly) protein is AT-rich binding protein.